A 427-amino-acid chain; its full sequence is Glutamate-1-semialdehyde 2,1-aminomutase (427 aa).

Lys265 is subject to N6-(pyridoxal phosphate)lysine.

It belongs to the class-III pyridoxal-phosphate-dependent aminotransferase family. HemL subfamily. As to quaternary structure, homodimer. Requires pyridoxal 5'-phosphate as cofactor.

The protein localises to the cytoplasm. It carries out the reaction (S)-4-amino-5-oxopentanoate = 5-aminolevulinate. Its pathway is porphyrin-containing compound metabolism; protoporphyrin-IX biosynthesis; 5-aminolevulinate from L-glutamyl-tRNA(Glu): step 2/2. The chain is Glutamate-1-semialdehyde 2,1-aminomutase from Burkholderia ambifaria (strain MC40-6).